A 237-amino-acid chain; its full sequence is Small ribosomal subunit protein eS4 (237 aa).

The 73-residue stretch at 38–110 folds into the S4 RNA-binding domain; that stretch reads LPLAVVVRDV…EAKYYDLKPI (73 aa).

This sequence belongs to the eukaryotic ribosomal protein eS4 family.

In Pyrobaculum calidifontis (strain DSM 21063 / JCM 11548 / VA1), this protein is Small ribosomal subunit protein eS4.